A 1378-amino-acid polypeptide reads, in one-letter code: Protein CLASP-1 (1378 aa).

The stretch at 168–206 (LIPQLCRLTNDPNSEVRDVSTQCLIDLMVYGGKPIVAKI) is one HEAT 1 repeat. Disordered stretches follow at residues 231-254 (RGDL…RNSL), 266-325 (IHPS…TRSS), and 590-725 (MLRD…HQTP). 2 stretches are compositionally biased toward low complexity: residues 269–283 (SAST…RLST) and 610–619 (NQKQQPNQQN). Composition is skewed to polar residues over residues 620–630 (ISQKFLSQRSA) and 637–648 (IQLSVKPQTTAI). Residues 664-676 (SSTSTSFSAVRSS) show a composition bias toward low complexity. Residues 677–690 (GYGQNQSTTPNRAK) are compositionally biased toward polar residues. The segment covering 704–721 (TNGNNNNKSSSSSPSTST) has biased composition (low complexity). Residues 740–767 (ASLTQEQANCLQNAMNTAKDEMSKNNED) adopt a coiled-coil conformation. A compositionally biased stretch (basic and acidic residues) spans 775 to 784 (IRKTPPKEVP). The disordered stretch occupies residues 775–823 (IRKTPPKEVPRSYNNSPFKPSNLDSSVHRSYNNNSPFRPSSGSVGSGSN). A compositionally biased stretch (polar residues) spans 786-812 (SYNNSPFKPSNLDSSVHRSYNNNSPFR). An HEAT 2 repeat occupies 1305–1341 (HLIVNDVAPCFVTAYESMSSTVRKCAVFGLVALVQRV).

The protein belongs to the CLASP family.

It localises to the cytoplasm. The protein localises to the cytoskeleton. Its function is as follows. Microtubule plus-end tracking protein that promotes the stabilization of dynamic microtubules. Operates redundantly with cls-2 and cls-3 in regulating microtubule processes which position the spindle during asymmetric cell division. The chain is Protein CLASP-1 (cls-1) from Caenorhabditis elegans.